Consider the following 206-residue polypeptide: Triafestin-2 (206 aa).

The signal sequence occupies residues 1-18 (MKTILAVIFFGILAFAFA). N-linked (GlcNAc...) asparagine glycosylation is found at N25, N55, and N178.

It belongs to the calycin superfamily. Triabin family. Interacts with host coagulation factor XII (F12) (inactive and activated) (via amino acids 1-77). Interacts with host high molecular weight kininogen (KNG1) (via amino acids 402-532). As to expression, salivary gland (at protein level).

It localises to the secreted. Its activity is regulated as follows. Zn(2+) modulates binding to host coagulation factor XII (F12) and high molecular weight kininogen (KNG1). In terms of biological role, suppresses activation of the host plasma kallikrein-kinin system, leading to inhibition of the intrinsic coagulation pathway. Blocks host coagulation factor XII (F12) and prekallikrein (KLKB1) reciprocal activation without affecting their amidolytic activities. Blocks binding of host F12 and high molecular weight kininogen (KNG1) to negatively charged surfaces. Attenuates generation of bradykinin by interfering with activation of host kallikrein-kinin system. The sequence is that of Triafestin-2 from Triatoma infestans (Assassin bug).